The primary structure comprises 449 residues: Biotin carboxylase (449 aa).

Residues 1-445 (MLEKVLIANR…NIHYLEKKLG (445 aa)) form the Biotin carboxylation domain. ATP contacts are provided by residues Lys116, Lys159, 165–166 (GG), 201–204 (EKFL), His209, and His236. Residues 120-317 (KDAMKRAGVP…IVKEMLRIAS (198 aa)) form the ATP-grasp domain. Residue Lys238 participates in hydrogencarbonate binding. Residues Glu276 and Glu288 each contribute to the ATP site. The Mg(2+) site is built by Glu276, Glu288, and Asn290. Residues Glu276, Glu288, and Asn290 each contribute to the Mn(2+) site. Hydrogencarbonate is bound by residues Arg292, Val295, and Arg338. Arg292 is a catalytic residue. Residue Arg338 coordinates biotin.

Acetyl-CoA carboxylase is a heterohexamer of biotin carboxyl carrier protein, biotin carboxylase and the two subunits of carboxyl transferase in a 2:2 complex. Mg(2+) serves as cofactor. Requires Mn(2+) as cofactor.

It carries out the reaction N(6)-biotinyl-L-lysyl-[protein] + hydrogencarbonate + ATP = N(6)-carboxybiotinyl-L-lysyl-[protein] + ADP + phosphate + H(+). It participates in lipid metabolism; malonyl-CoA biosynthesis; malonyl-CoA from acetyl-CoA: step 1/1. Its function is as follows. This protein is a component of the acetyl coenzyme A carboxylase complex; first, biotin carboxylase catalyzes the carboxylation of the carrier protein and then the transcarboxylase transfers the carboxyl group to form malonyl-CoA. The sequence is that of Biotin carboxylase (accC) from Pseudomonas aeruginosa (strain ATCC 15692 / DSM 22644 / CIP 104116 / JCM 14847 / LMG 12228 / 1C / PRS 101 / PAO1).